The chain runs to 507 residues: Beta-glucosidase 13 (507 aa).

Residues 1-22 (MRTKYFSLLVFIIVLASNEVIA) form the signal peptide. An a beta-D-glucoside-binding site is contributed by Q50. The N-linked (GlcNAc...) asparagine glycan is linked to N81. A beta-D-glucoside contacts are provided by residues H154 and 199–200 (NE). The active-site Proton donor is E200. A disulfide bridge connects residues C219 and C227. N-linked (GlcNAc...) asparagine glycosylation occurs at N226. Residue Y344 participates in a beta-D-glucoside binding. An N-linked (GlcNAc...) asparagine glycan is attached at N358. A beta-D-glucoside contacts are provided by residues E414, W459, 466-467 (EW), and F475. E414 serves as the catalytic Nucleophile.

Belongs to the glycosyl hydrolase 1 family.

It catalyses the reaction Hydrolysis of terminal, non-reducing beta-D-glucosyl residues with release of beta-D-glucose.. In Arabidopsis thaliana (Mouse-ear cress), this protein is Beta-glucosidase 13.